Consider the following 716-residue polypeptide: Ubiquitin thioesterase zranb1-B (716 aa).

2 RanBP2-type zinc fingers span residues 3–33 (DLGL…QRHN) and 82–111 (TSSK…QRQQ). Zn(2+) contacts are provided by Cys10, Cys13, Cys24, Cys27, Cys88, Cys91, Cys102, and Cys105. Residues 113-143 (SQQHSPLSPSETPQTSGSRPSPVTSDPCEEY) form a disordered region. Residues 118–136 (PLSPSETPQTSGSRPSPVT) are compositionally biased toward polar residues. The RanBP2-type 3 zinc-finger motif lies at 152-181 (HAQRWPCSACTYENWPKSLRCVVCDHPKPS). The Zn(2+) site is built by Cys158, Cys161, Cys172, and Cys175. The disordered stretch occupies residues 178–228 (PKPSGSPETPQQDSEAESATSPSIVNEQERENVRTAGGGGGGSRGRLRKLS). Residues 183 to 203 (SPETPQQDSEAESATSPSIVN) show a composition bias toward polar residues. ANK repeat units follow at residues 268–298 (RRSD…SGGD) and 321–348 (FTLV…QQTA). Residues 440 to 600 (LYALWNRTAG…RGHFSALVAM (161 aa)) form the OTU domain. Cys451 acts as the Nucleophile in catalysis. Residue His593 is the Proton acceptor of the active site.

This sequence belongs to the peptidase C64 family.

The protein localises to the cytoplasm. It localises to the nucleus. The enzyme catalyses Thiol-dependent hydrolysis of ester, thioester, amide, peptide and isopeptide bonds formed by the C-terminal Gly of ubiquitin (a 76-residue protein attached to proteins as an intracellular targeting signal).. Ubiquitin thioesterase, which specifically hydrolyzes 'Lys-29'-linked and 'Lys-33'-linked diubiquitin. Also cleaves 'Lys-63'-linked chains, but with 40-fold less efficiency compared to 'Lys-29'-linked ones. Positive regulator of the Wnt signaling pathway that deubiquitinates apc protein, a negative regulator of Wnt-mediated transcription. Acts as a regulator of autophagy by mediating deubiquitination of pik3c3/vps34, thereby promoting autophagosome maturation. Plays a role in the regulation of cell morphology and cytoskeletal organization. Required in the stress fiber dynamics and cell migration. The protein is Ubiquitin thioesterase zranb1-B (zranb1b) of Danio rerio (Zebrafish).